We begin with the raw amino-acid sequence, 56 residues long: Ribosome biogenesis protein Nop10 (56 aa).

Belongs to the NOP10 family.

Involved in ribosome biogenesis; more specifically in 18S rRNA pseudouridylation and in cleavage of pre-rRNA. In Methanococcoides burtonii (strain DSM 6242 / NBRC 107633 / OCM 468 / ACE-M), this protein is Ribosome biogenesis protein Nop10.